The chain runs to 34 residues: Colipase (34 aa).

2 disulfide bridges follow: Cys-12-Cys-23 and Cys-18-Cys-34.

It belongs to the colipase family. As to quaternary structure, forms a 1:1 stoichiometric complex with pancreatic lipase. In terms of tissue distribution, expressed by the pancreas.

Its subcellular location is the secreted. In terms of biological role, colipase is a cofactor of pancreatic lipase. It allows the lipase to anchor itself to the lipid-water interface. Without colipase the enzyme is washed off by bile salts, which have an inhibitory effect on the lipase. This is Colipase (CLPS) from Gallus gallus (Chicken).